Reading from the N-terminus, the 234-residue chain is GTP:AMP phosphotransferase, mitochondrial (234 aa).

24-29 is a GTP binding site; that stretch reads GSGKGT. The tract at residues 45–74 is NMP; sequence SSGDILRQEIKSESTLGREATTYIAQGKLL. Residues Ser46, Arg51, 72-74, 103-106, and Gln110 each bind AMP; these read KLL and GFPR. The interval 144–181 is LID; the sequence is NRYVHVPSGRVYNLQYNPPKVPGLDDITGEPLTKRLDD. GTP-binding positions include Arg145 and 154–155; that span reads VY. Arg178 and Arg189 together coordinate AMP. Ser218 lines the GTP pocket.

The protein belongs to the adenylate kinase family. AK3 subfamily. As to quaternary structure, monomer.

The protein resides in the mitochondrion matrix. It carries out the reaction a ribonucleoside 5'-triphosphate + AMP = a ribonucleoside 5'-diphosphate + ADP. Involved in maintaining the homeostasis of cellular nucleotides by catalyzing the interconversion of nucleoside phosphates. Has GTP:AMP phosphotransferase and ITP:AMP phosphotransferase activities. Does not accept ATP as phosphate donor. The polypeptide is GTP:AMP phosphotransferase, mitochondrial (Saccharomyces cerevisiae (Baker's yeast)).